A 215-amino-acid chain; its full sequence is 3-isopropylmalate dehydratase small subunit (215 aa).

Belongs to the LeuD family. LeuD type 1 subfamily. In terms of assembly, heterodimer of LeuC and LeuD.

It carries out the reaction (2R,3S)-3-isopropylmalate = (2S)-2-isopropylmalate. The protein operates within amino-acid biosynthesis; L-leucine biosynthesis; L-leucine from 3-methyl-2-oxobutanoate: step 2/4. In terms of biological role, catalyzes the isomerization between 2-isopropylmalate and 3-isopropylmalate, via the formation of 2-isopropylmaleate. This is 3-isopropylmalate dehydratase small subunit from Xanthomonas axonopodis pv. citri (strain 306).